Here is a 955-residue protein sequence, read N- to C-terminus: Kinesin heavy chain isoform 5C (955 aa).

Residues 8-327 enclose the Kinesin motor domain; it reads SIKVMCRFRP…LMFGQRAKTI (320 aa). Residues Gln-87, Ser-89, Ser-90, Gly-91, Lys-92, Thr-93, His-94, and Lys-99 each coordinate ATP. The interval 174–315 is microtubule-binding; the sequence is VSSPEEVMDV…PSVFNEAETK (142 aa). Positions 332–366 form a coiled coil; sequence SVNLELTAEEWKKKYEKEKEKNKALKSVIQHLEVE. Phosphothreonine is present on Thr-403. Coiled coils occupy residues 413 to 538 and 590 to 913; these read KEKY…LQEL and ISKM…KNMA. The interval 859-955 is globular; it reads CELPKLEKRL…GSSNSTHYQK (97 aa). Residues 909–955 are disordered; that stretch reads AKNMARRAHSAQIAKPIRPGHYPASSPTAVHAVRGGGGSSNSTHYQK.

This sequence belongs to the TRAFAC class myosin-kinesin ATPase superfamily. Kinesin family. Kinesin subfamily. As to quaternary structure, oligomer composed of two heavy chains and two light chains. Interacts with GRIP1. Interacts with TRAK1. Interacts with ZFYVE27. Interacts with KLC3.

Its subcellular location is the cytoplasm. The protein localises to the cytoskeleton. It localises to the cell projection. The protein resides in the dendrite. It catalyses the reaction ATP + H2O = ADP + phosphate + H(+). Its function is as follows. Microtubule-associated force-producing protein that may play a role in organelle transport. Has ATPase activity. Involved in synaptic transmission. Mediates dendritic trafficking of mRNAs. Required for anterograde axonal transportation of MAPK8IP3/JIP3 which is essential for MAPK8IP3/JIP3 function in axon elongation. The chain is Kinesin heavy chain isoform 5C (Kif5c) from Rattus norvegicus (Rat).